The sequence spans 298 residues: Lipoyl synthase (298 aa).

7 residues coordinate [4Fe-4S] cluster: cysteine 43, cysteine 48, cysteine 54, cysteine 69, cysteine 73, cysteine 76, and serine 280. Residues 55–269 enclose the Radical SAM core domain; sequence FSSGTATFLI…AACGRGMGIP (215 aa).

The protein belongs to the radical SAM superfamily. Lipoyl synthase family. The cofactor is [4Fe-4S] cluster.

The protein localises to the cytoplasm. The catalysed reaction is [[Fe-S] cluster scaffold protein carrying a second [4Fe-4S](2+) cluster] + N(6)-octanoyl-L-lysyl-[protein] + 2 oxidized [2Fe-2S]-[ferredoxin] + 2 S-adenosyl-L-methionine + 4 H(+) = [[Fe-S] cluster scaffold protein] + N(6)-[(R)-dihydrolipoyl]-L-lysyl-[protein] + 4 Fe(3+) + 2 hydrogen sulfide + 2 5'-deoxyadenosine + 2 L-methionine + 2 reduced [2Fe-2S]-[ferredoxin]. It participates in protein modification; protein lipoylation via endogenous pathway; protein N(6)-(lipoyl)lysine from octanoyl-[acyl-carrier-protein]: step 2/2. In terms of biological role, catalyzes the radical-mediated insertion of two sulfur atoms into the C-6 and C-8 positions of the octanoyl moiety bound to the lipoyl domains of lipoate-dependent enzymes, thereby converting the octanoylated domains into lipoylated derivatives. This is Lipoyl synthase from Nitratidesulfovibrio vulgaris (strain DP4) (Desulfovibrio vulgaris).